Reading from the N-terminus, the 402-residue chain is NADH-quinone oxidoreductase subunit D (402 aa).

The protein belongs to the complex I 49 kDa subunit family. As to quaternary structure, NDH-1 is composed of 14 different subunits. Subunits NuoB, C, D, E, F, and G constitute the peripheral sector of the complex.

It is found in the cell inner membrane. The enzyme catalyses a quinone + NADH + 5 H(+)(in) = a quinol + NAD(+) + 4 H(+)(out). Functionally, NDH-1 shuttles electrons from NADH, via FMN and iron-sulfur (Fe-S) centers, to quinones in the respiratory chain. The immediate electron acceptor for the enzyme in this species is believed to be ubiquinone. Couples the redox reaction to proton translocation (for every two electrons transferred, four hydrogen ions are translocated across the cytoplasmic membrane), and thus conserves the redox energy in a proton gradient. This is NADH-quinone oxidoreductase subunit D from Nitrobacter winogradskyi (strain ATCC 25391 / DSM 10237 / CIP 104748 / NCIMB 11846 / Nb-255).